The sequence spans 100 residues: Small ribosomal subunit protein uS14m (100 aa).

It belongs to the universal ribosomal protein uS14 family.

The protein localises to the mitochondrion. The polypeptide is Small ribosomal subunit protein uS14m (RPS14) (Brassica napus (Rape)).